Reading from the N-terminus, the 629-residue chain is UvrABC system protein C (629 aa).

The 80-residue stretch at 26 to 105 folds into the GIY-YIG domain; that stretch reads TSPGIYQFKN…IKELKPRYNV (80 aa). The UVR domain maps to 219–254; sequence SALIRSLTENMHLAATELRFEQAAEIKAQIESLKRY.

Belongs to the UvrC family. Interacts with UvrB in an incision complex.

The protein resides in the cytoplasm. Its function is as follows. The UvrABC repair system catalyzes the recognition and processing of DNA lesions. UvrC both incises the 5' and 3' sides of the lesion. The N-terminal half is responsible for the 3' incision and the C-terminal half is responsible for the 5' incision. In Chlorobium chlorochromatii (strain CaD3), this protein is UvrABC system protein C.